Here is a 319-residue protein sequence, read N- to C-terminus: Serine acetyltransferase, plasmid (319 aa).

The protein belongs to the transferase hexapeptide repeat family.

Its subcellular location is the cytoplasm. It carries out the reaction L-serine + acetyl-CoA = O-acetyl-L-serine + CoA. The protein operates within amino-acid biosynthesis; L-cysteine biosynthesis; L-cysteine from L-serine: step 1/2. This Synechococcus elongatus (strain ATCC 33912 / PCC 7942 / FACHB-805) (Anacystis nidulans R2) protein is Serine acetyltransferase, plasmid (srpH).